A 63-amino-acid polypeptide reads, in one-letter code: Conotoxin Gm5.1 (63 aa).

The signal sequence occupies residues 1–21; the sequence is MRYLPVFVILLLLIASIPSDT. Residues 22-50 constitute a propeptide that is removed on maturation; it reads VQLKTKDDMPLASFHGNGRRILRMLSNKR.

It belongs to the conotoxin T superfamily. In terms of processing, contains 2 disulfide bonds that can be either 'C1-C3, C2-C4' or 'C1-C4, C2-C3', since these disulfide connectivities have been observed for conotoxins with cysteine framework V (for examples, see AC P0DQQ7 and AC P81755). In terms of tissue distribution, expressed by the venom duct.

Its subcellular location is the secreted. The polypeptide is Conotoxin Gm5.1 (Conus gloriamaris (Glory-of-the-Sea cone)).